A 270-amino-acid polypeptide reads, in one-letter code: Surfeit locus protein 4 homolog (270 aa).

Transmembrane regions (helical) follow at residues 65–85 (FLAT…CGMV), 93–113 (IAVG…SILW), 115–135 (FQFL…LAEA), 178–198 (LSVW…LVVL), 206–226 (ALIL…WWTI), and 243–263 (TLSV…GVSM). Positions 267–270 (KKKW) match the Di-lysine motif motif.

It belongs to the SURF4 family.

Its subcellular location is the endoplasmic reticulum membrane. Functionally, endoplasmic reticulum cargo receptor that mediates the export of lipoproteins by recruiting cargos into COPII vesicles to facilitate their secretion. This chain is Surfeit locus protein 4 homolog, found in Drosophila melanogaster (Fruit fly).